The chain runs to 339 residues: Aspartate carbamoyltransferase catalytic subunit (339 aa).

Carbamoyl phosphate is bound by residues Arg59 and Thr60. Lys87 provides a ligand contact to L-aspartate. Carbamoyl phosphate is bound by residues Arg109, His142, and Gln145. Residues Arg182 and Arg253 each coordinate L-aspartate. The carbamoyl phosphate site is built by Gly294 and Pro295.

The protein belongs to the aspartate/ornithine carbamoyltransferase superfamily. ATCase family. As to quaternary structure, heterododecamer (2C3:3R2) of six catalytic PyrB chains organized as two trimers (C3), and six regulatory PyrI chains organized as three dimers (R2).

The catalysed reaction is carbamoyl phosphate + L-aspartate = N-carbamoyl-L-aspartate + phosphate + H(+). Its pathway is pyrimidine metabolism; UMP biosynthesis via de novo pathway; (S)-dihydroorotate from bicarbonate: step 2/3. Its function is as follows. Catalyzes the condensation of carbamoyl phosphate and aspartate to form carbamoyl aspartate and inorganic phosphate, the committed step in the de novo pyrimidine nucleotide biosynthesis pathway. This is Aspartate carbamoyltransferase catalytic subunit from Prochlorococcus marinus (strain NATL2A).